The following is a 75-amino-acid chain: Transaldolase (75 aa).

The protein belongs to the transaldolase family. Type 1 subfamily. In terms of assembly, homodimer. Phosphorylated. As to expression, predominantly expressed in Y-organs.

It localises to the cytoplasm. The catalysed reaction is D-sedoheptulose 7-phosphate + D-glyceraldehyde 3-phosphate = D-erythrose 4-phosphate + beta-D-fructose 6-phosphate. It participates in carbohydrate degradation; pentose phosphate pathway; D-glyceraldehyde 3-phosphate and beta-D-fructose 6-phosphate from D-ribose 5-phosphate and D-xylulose 5-phosphate (non-oxidative stage): step 2/3. In terms of biological role, transaldolase is important for the balance of metabolites in the pentose-phosphate pathway. May play a role in the conversion of sterols into ecdysteroids via NADPH. The protein is Transaldolase of Carcinus maenas (Common shore crab).